A 1063-amino-acid polypeptide reads, in one-letter code: Exportin-T (1063 aa).

The protein belongs to the exportin family.

It localises to the nucleus. The protein resides in the cytoplasm. In terms of biological role, tRNA nucleus export receptor which facilitates tRNA translocation across the nuclear pore complex. Involved in pre-tRNA splicing, probably by affecting the interaction of pre-tRNA with splicing endonuclease. This chain is Exportin-T (LOS1), found in Kluyveromyces lactis (strain ATCC 8585 / CBS 2359 / DSM 70799 / NBRC 1267 / NRRL Y-1140 / WM37) (Yeast).